A 42-amino-acid chain; its full sequence is Photosystem II reaction center protein J (42 aa).

Residues 10–30 (IPLWLVGTVAGTAALTLVAVF) form a helical membrane-spanning segment.

The protein belongs to the PsbJ family. In terms of assembly, PSII is composed of 1 copy each of membrane proteins PsbA, PsbB, PsbC, PsbD, PsbE, PsbF, PsbH, PsbI, PsbJ, PsbK, PsbL, PsbM, PsbT, PsbX, PsbY, PsbZ, Psb30/Ycf12, at least 3 peripheral proteins of the oxygen-evolving complex and a large number of cofactors. It forms dimeric complexes.

It localises to the plastid. It is found in the chloroplast thylakoid membrane. Its function is as follows. One of the components of the core complex of photosystem II (PSII). PSII is a light-driven water:plastoquinone oxidoreductase that uses light energy to abstract electrons from H(2)O, generating O(2) and a proton gradient subsequently used for ATP formation. It consists of a core antenna complex that captures photons, and an electron transfer chain that converts photonic excitation into a charge separation. This chain is Photosystem II reaction center protein J, found in Chlorella vulgaris (Green alga).